A 181-amino-acid chain; its full sequence is Organ-specific protein S2 (181 aa).

Tandem repeats lie at residues 59-84, 85-110, 111-136, and 137-162. The tract at residues 59–162 is 4 X 26 AA tandem repeats; sequence HAKENMGAIG…NASAYGDNEI (104 aa). Positions 94 to 181 are disordered; that stretch reads GEFEPRPNAS…PRPSMTKYNA (88 aa).

To organ specific protein P4. Expressed in stems.

This Pisum sativum (Garden pea) protein is Organ-specific protein S2.